Consider the following 481-residue polypeptide: ATP synthase subunit beta, chloroplastic (481 aa).

An ATP-binding site is contributed by 161–168; the sequence is GGAGVGKT.

It belongs to the ATPase alpha/beta chains family. F-type ATPases have 2 components, CF(1) - the catalytic core - and CF(0) - the membrane proton channel. CF(1) has five subunits: alpha(3), beta(3), gamma(1), delta(1), epsilon(1). CF(0) has four main subunits: a(1), b(1), b'(1) and c(9-12).

It localises to the plastid. Its subcellular location is the chloroplast thylakoid membrane. It carries out the reaction ATP + H2O + 4 H(+)(in) = ADP + phosphate + 5 H(+)(out). Its function is as follows. Produces ATP from ADP in the presence of a proton gradient across the membrane. The catalytic sites are hosted primarily by the beta subunits. The sequence is that of ATP synthase subunit beta, chloroplastic from Dictyota dichotoma.